The chain runs to 263 residues: Serine protease ami (263 aa).

Positions 1-21 are cleaved as a signal peptide; sequence MNISRVLFAVVLVLTVSTYEC. N-linked (GlcNAc...) asparagine glycosylation occurs at Asn-2. A propeptide spans 22-26 (activation peptide); it reads RPRGR. Residues 27–254 form the Peptidase S1 domain; sequence ILGGQDSKEK…YKSWIMETMY (228 aa). Cysteines 52 and 68 form a disulfide. His-67 acts as the Charge relay system in catalysis. Asn-73, Asn-74, and Asn-108 each carry an N-linked (GlcNAc...) asparagine glycan. The Charge relay system role is filled by Asp-115. Cystine bridges form between Cys-149–Cys-215, Cys-180–Cys-196, and Cys-205–Cys-230. Catalysis depends on Ser-209, which acts as the Charge relay system. Residue Asn-255 is glycosylated (N-linked (GlcNAc...) asparagine).

This sequence belongs to the peptidase S1 family. In terms of tissue distribution, in the embryo, localizes to paraxial regions at the neurula stage and anterior ventral regions at the tailbud stage. From the late tailbud to tadpole stage, expressed along the forming blood vessels including the anterior cardinal veins, posterior cardinal veins, intersomitic veins, dorsal longitudinal anastomosing vessel, dorsal aorta, pronephric sinus and most prominently around the vascular vitelline network, where expression shows left-right asymmetry in the stage 42 embryo. Localizes to endothelial cells. In adults, shows highest expression in liver with moderate levels of expression in the fat body, lung, gut and vessels. Weakly expressed in adult heart, muscle, testis and ovary.

It localises to the secreted. Functionally, probable serine protease. The chain is Serine protease ami from Xenopus laevis (African clawed frog).